The sequence spans 268 residues: MRQEDRRTGVVARKLGMTRIFAEDGSHVPCTVLHMDNVQVVSHKTADRDGYVALQLGAGEAKAKRTPKAMRGHFAKAKVAPKRKLVEFRVAEDALIEVGSELTADHFVPGQKVDVAGISIGKGFAGAMKRHGFGGLRATHGVSISHRSHGSTGQCQDPGKVFKGKKMAGHMGAVRVTTQNIEVVRVDVERGIVLVKGAVPGSAGGWVELRDAIKGHGGTELPLPGKFRTLDELNAPVTAEVVENEAAPADADNAAPEAAADGEEGTQA.

An N5-methylglutamine modification is found at Q156. Low complexity predominate over residues 242–259; the sequence is VENEAAPADADNAAPEAA. A disordered region spans residues 242–268; that stretch reads VENEAAPADADNAAPEAAADGEEGTQA.

It belongs to the universal ribosomal protein uL3 family. As to quaternary structure, part of the 50S ribosomal subunit. Forms a cluster with proteins L14 and L19. Methylated by PrmB.

In terms of biological role, one of the primary rRNA binding proteins, it binds directly near the 3'-end of the 23S rRNA, where it nucleates assembly of the 50S subunit. This chain is Large ribosomal subunit protein uL3, found in Maricaulis maris (strain MCS10) (Caulobacter maris).